We begin with the raw amino-acid sequence, 481 residues long: UDP-glycosyltransferase 85C2 (481 aa).

Histidine 23 functions as the Proton acceptor in the catalytic mechanism. Histidine 23 contributes to the an anthocyanidin binding site. Catalysis depends on aspartate 120, which acts as the Charge relay. UDP-alpha-D-glucose contacts are provided by threonine 143, glutamine 362, histidine 377, tryptophan 380, serine 382, glutamate 385, aspartate 401, and glutamine 402.

It belongs to the UDP-glycosyltransferase family.

It carries out the reaction steviol + UDP-alpha-D-glucose = steviolmonoside + UDP + H(+). It catalyses the reaction steviolmonoside + UDP-alpha-D-glucose = rubusoside + UDP. Its function is as follows. Involved in the biosynthesis of steviol glycosides in leaves. Converts steviol to the mono-glycoside steviolmonoside. Converts the mono-glycoside steviolmonoside to the bi-glycoside rubusoside. This Stevia rebaudiana (Stevia) protein is UDP-glycosyltransferase 85C2.